Here is a 207-residue protein sequence, read N- to C-terminus: Superoxide dismutase [Mn] (207 aa).

Residues His28, His76, Asp160, and His164 each contribute to the Mn(2+) site.

Belongs to the iron/manganese superoxide dismutase family. It depends on Mn(2+) as a cofactor.

The enzyme catalyses 2 superoxide + 2 H(+) = H2O2 + O2. Functionally, destroys superoxide anion radicals which are normally produced within the cells and which are toxic to biological systems. This is Superoxide dismutase [Mn] (sodA) from Mycobacterium leprae (strain TN).